Reading from the N-terminus, the 755-residue chain is Biodegradative arginine decarboxylase (755 aa).

At Lys-386 the chain carries N6-(pyridoxal phosphate)lysine.

It belongs to the Orn/Lys/Arg decarboxylase class-I family. In terms of assembly, homodecamer. The basic unit is a homodimer, organized into a ring of giving a pentamer of five homodimers. It depends on pyridoxal 5'-phosphate as a cofactor.

The protein localises to the cytoplasm. It carries out the reaction L-arginine + H(+) = agmatine + CO2. With respect to regulation, homodimers are probably inactive, their assembly into a homodecamer at low pH requires neutralization of negatively charged residues. This uses cytoplasmic protons, contributing pH regulation and stabilizes the homodecamer. Functionally, component of the acid-resistance (AR) system allowing enteric pathogens to survive the acidic environment in the stomach. ADC can be found in two forms: biodegradative (this enzyme) and biosynthetic (speA). The biodegradative form plays a role in regulating pH by consuming proteins. Converts arginine imported by AdiC to agmatine which is then exported by AdiC. The sequence is that of Biodegradative arginine decarboxylase (adiA) from Escherichia coli (strain K12).